The sequence spans 381 residues: Probable peptidoglycan glycosyltransferase FtsW (381 aa).

Residues 1–15 (MNNKKKIVKIFFYDK) lie on the Cytoplasmic side of the membrane. A helical transmembrane segment spans residues 16-36 (ILFFLLISLSIIGIIIVSSAS). Residues 37-53 (ISFGIRLHNDYFYFAKR) lie on the Periplasmic side of the membrane. Residues 54-74 (NLLYFFLSFFLFFQIIRIPIN) form a helical membrane-spanning segment. Topologically, residues 75 to 81 (QLEKYNK) are cytoplasmic. A helical membrane pass occupies residues 82–102 (IALLINLFLLIIVFIIGNSIN). Residues 103 to 109 (GAIRWIK) lie on the Periplasmic side of the membrane. A helical membrane pass occupies residues 110–130 (IGFFSIQPSECSKLILFFYIS). The Cytoplasmic portion of the chain corresponds to 131–143 (DYIVKKNKELKNK). A helical transmembrane segment spans residues 144-164 (LWGFLKPIIIMLIFVILLLMQ). Residues 165-166 (PD) are Periplasmic-facing. 2 consecutive transmembrane segments (helical) span residues 167–187 (LGNSLILFLTTLLLFFLAGIN) and 188–208 (LWKCCFMFLFGLLTIFILIIF). The Periplasmic segment spans residues 209 to 278 (KPYRIRRILS…FSILGEELGY (70 aa)). Residues 279-299 (IGSIIILIMLFFVIFRIFLIG) traverse the membrane as a helical segment. Residues 300–317 (KNSFIQKKFFSGYFSFSV) lie on the Cytoplasmic side of the membrane. A helical membrane pass occupies residues 318–338 (GIWISLQTIMNVGGVIGILPI). Over 339–343 (KGLTL) the chain is Periplasmic. Residues 344–364 (PFISYGGSSLITIFSAIAIVI) form a helical membrane-spanning segment. Over 365–381 (RSDFELRINKYQAYLKQ) the chain is Cytoplasmic.

Belongs to the SEDS family. FtsW subfamily.

The protein localises to the cell inner membrane. The enzyme catalyses [GlcNAc-(1-&gt;4)-Mur2Ac(oyl-L-Ala-gamma-D-Glu-L-Lys-D-Ala-D-Ala)](n)-di-trans,octa-cis-undecaprenyl diphosphate + beta-D-GlcNAc-(1-&gt;4)-Mur2Ac(oyl-L-Ala-gamma-D-Glu-L-Lys-D-Ala-D-Ala)-di-trans,octa-cis-undecaprenyl diphosphate = [GlcNAc-(1-&gt;4)-Mur2Ac(oyl-L-Ala-gamma-D-Glu-L-Lys-D-Ala-D-Ala)](n+1)-di-trans,octa-cis-undecaprenyl diphosphate + di-trans,octa-cis-undecaprenyl diphosphate + H(+). The protein operates within cell wall biogenesis; peptidoglycan biosynthesis. Peptidoglycan polymerase that is essential for cell division. The polypeptide is Probable peptidoglycan glycosyltransferase FtsW (Wigglesworthia glossinidia brevipalpis).